Here is a 201-residue protein sequence, read N- to C-terminus: MSTEPTNQDQAPIDEALTQEVAQDEASLMDELTQANFRVEELEQLLAESQAALAERKDVEMRAAAETQNIRTRAAKDVEQARKFALEKFANELLPVIDNMERALQGTNPEDEATKAIYEGVELTMKGFLTSVEKFGVKQVNPQGETFNPDHHQAIGMQPSPDFPANTVMMVMQKGYLLNDRLLRPAMVMVSQGGPSVDIEA.

Belongs to the GrpE family. As to quaternary structure, homodimer.

The protein resides in the cytoplasm. In terms of biological role, participates actively in the response to hyperosmotic and heat shock by preventing the aggregation of stress-denatured proteins, in association with DnaK and GrpE. It is the nucleotide exchange factor for DnaK and may function as a thermosensor. Unfolded proteins bind initially to DnaJ; upon interaction with the DnaJ-bound protein, DnaK hydrolyzes its bound ATP, resulting in the formation of a stable complex. GrpE releases ADP from DnaK; ATP binding to DnaK triggers the release of the substrate protein, thus completing the reaction cycle. Several rounds of ATP-dependent interactions between DnaJ, DnaK and GrpE are required for fully efficient folding. The sequence is that of Protein GrpE from Shewanella denitrificans (strain OS217 / ATCC BAA-1090 / DSM 15013).